The chain runs to 146 residues: Glycosylation-dependent cell adhesion molecule 1 (146 aa).

An N-terminal signal peptide occupies residues 1–19; that stretch reads MKFFTVLLFASLAATSLAA. The segment at 25-112 is disordered; that stretch reads DELHLRTQPT…SAATSEGKLT (88 aa). A compositionally biased stretch (basic and acidic residues) spans 48–60; it reads ISKESTSSKDLSK. Ser-54, Ser-59, and Ser-71 each carry phosphoserine. The span at 74 to 106 shows a compositional bias: polar residues; that stretch reads NVGTESTKPQSQEAQDGLRSGSSQQEETTSAAT.

It belongs to the PP3/GlyCAM-1 family. Extensively O-glycosylated. As to expression, lymph nodes. Associated with the lumenal surface of the high endothelial venules of peripheral lymph nodes.

The protein resides in the cell membrane. Its function is as follows. Adhesion molecule that accomplishes cell binding by presenting carbohydrate(s) to the lectin domain of L-selectin. This is Glycosylation-dependent cell adhesion molecule 1 (Glycam1) from Rattus norvegicus (Rat).